Consider the following 159-residue polypeptide: MGTEAGSAPVVRGRGLKVHHLRPAPGAHKSKIRVGRGEGSKGKTAGRGTKGSKARKQVPARFEGGQMPLHMRLPKLKGFRNRFRVEYQVVNVATLAELFPQGGEVTKADLAARGAVRGKSPVKVLGNGDINVALHVSADAFSASAKEKIAAAGGSVTQS.

A compositionally biased stretch (basic residues) spans 21 to 34 (LRPAPGAHKSKIRV). Residues 21–55 (LRPAPGAHKSKIRVGRGEGSKGKTAGRGTKGSKAR) form a disordered region.

It belongs to the universal ribosomal protein uL15 family. Part of the 50S ribosomal subunit.

Binds to the 23S rRNA. In Frankia casuarinae (strain DSM 45818 / CECT 9043 / HFP020203 / CcI3), this protein is Large ribosomal subunit protein uL15.